Reading from the N-terminus, the 114-residue chain is Prostate stem cell antigen (114 aa).

A signal peptide spans 1-11 (MAGLALQPGTA). A UPAR/Ly6 domain is found at 12–86 (LLCYSCKAQV…CCDTDLCNAS (75 aa)). Intrachain disulfides connect cysteine 14/cysteine 39, cysteine 17/cysteine 26, cysteine 32/cysteine 57, cysteine 61/cysteine 77, and cysteine 78/cysteine 83. Residue asparagine 31 is glycosylated (N-linked (GlcNAc...) asparagine). Residue serine 86 is the site of GPI-anchor amidated serine attachment. The propeptide at 86-114 (SGAHALQPAAAILALLPALGLLLWGPGQL) is removed in mature form.

As to quaternary structure, interacts with CHRNA4. Post-translationally, N-glycosylated. As to expression, highly expressed in prostate (basal, secretory and neuroendocrine epithelium cells). Also found in bladder (transitional epithelium), placenta (trophoblasts), stomach (neuroendocrine cells), colon (neuroendocrine cells) and kidney (collecting ducts). Overexpressed in prostate cancers and expression is correlated with tumor stage, grade and androgen-independence. Highly expressed in prostate cancer bone metastases. Expressed in gastric epithelial cells, mainly in the isthmus (at protein level). Not detected in normal intestinal epithelium (at protein level). Expressed in brain cortex; expression is significantly increased in the front cortex of Alzheimer disease patients.

It is found in the cell membrane. May be involved in the regulation of cell proliferation. Has a cell-proliferation inhibition activity in vitro. In terms of biological role, may act as a modulator of nicotinic acetylcholine receptors (nAChRs) activity. In vitro inhibits nicotine-induced signaling probably implicating alpha-3:beta-2- or alpha-7-containing nAChRs. The chain is Prostate stem cell antigen (PSCA) from Homo sapiens (Human).